The primary structure comprises 290 residues: Small ribosomal subunit biogenesis GTPase RsgA (290 aa).

Residues 61-218 (SSELLRPAVA…IVDTPGFSTL (158 aa)) enclose the CP-type G domain. GTP contacts are provided by residues 110–113 (NKVD) and 161–169 (GPSGAGKST). Residues Cys-243, Cys-248, His-250, and Cys-256 each coordinate Zn(2+).

Belongs to the TRAFAC class YlqF/YawG GTPase family. RsgA subfamily. As to quaternary structure, monomer. Associates with 30S ribosomal subunit, binds 16S rRNA. Zn(2+) is required as a cofactor.

The protein localises to the cytoplasm. In terms of biological role, one of several proteins that assist in the late maturation steps of the functional core of the 30S ribosomal subunit. Helps release RbfA from mature subunits. May play a role in the assembly of ribosomal proteins into the subunit. Circularly permuted GTPase that catalyzes slow GTP hydrolysis, GTPase activity is stimulated by the 30S ribosomal subunit. The protein is Small ribosomal subunit biogenesis GTPase RsgA of Clostridium botulinum (strain Eklund 17B / Type B).